The primary structure comprises 364 residues: MLIFPLINDTSRKIIHIDMDAFFAAVEERDNLALKGKPVVIGKDPRETGGRGVVSTCNYEARKYGIHSAMSSKEAYERCPKAIFISGNYEKYRTVGEQIRRIFKRYTDVVEPMSIDEAYLDVTNNKLGIKSAVKIAKLIQHDIWKEVGLTCSAGVSYNKFLAKLASDFEKPHGLTLVLKEDALCFLAKLPIEKFHGVGKKSVEKLHDMGIYTGQDLLAVPEMTLIDHFGRFGFDLYRKARGISNSPVKSDRIRKSIGSERTYAKLLYQETDIKAEISKNAKRVAALLQDHKKLGKTIVLKVRYADFTTLTKRVTLPELTRNAAQIEQVAGDIFDSLSENPAGIRLLGVTMTNLEDKVADISLDL.

Residues 14 to 198 enclose the UmuC domain; sequence IIHIDMDAFF…LPIEKFHGVG (185 aa). D18 and D116 together coordinate Mg(2+). E117 is an active-site residue.

Belongs to the DNA polymerase type-Y family. As to quaternary structure, monomer. Mg(2+) is required as a cofactor.

It localises to the cytoplasm. The enzyme catalyses DNA(n) + a 2'-deoxyribonucleoside 5'-triphosphate = DNA(n+1) + diphosphate. Poorly processive, error-prone DNA polymerase involved in untargeted mutagenesis. Copies undamaged DNA at stalled replication forks, which arise in vivo from mismatched or misaligned primer ends. These misaligned primers can be extended by PolIV. Exhibits no 3'-5' exonuclease (proofreading) activity. May be involved in translesional synthesis, in conjunction with the beta clamp from PolIII. The polypeptide is DNA polymerase IV (Streptococcus pyogenes serotype M12 (strain MGAS2096)).